Consider the following 406-residue polypeptide: 3-isopropylmalate dehydrogenase, chloroplastic (406 aa).

Residues 1–34 (MAAALQTNIRPVKFPATLRALTKQSSPAPFRVRC) constitute a chloroplast transit peptide. The residue at position 71 (Ser71) is a Phosphoserine. 117–130 (GYKWDKNEKHLKPE) contributes to the NAD(+) binding site. Substrate contacts are provided by Arg137, Arg147, Arg175, and Asp265. Mg(2+) is bound by residues Asp265, Asp289, and Asp293. 323-335 (GSAPDIAGQDKAN) lines the NAD(+) pocket.

Belongs to the isocitrate and isopropylmalate dehydrogenases family. In terms of assembly, homodimer. It depends on Mg(2+) as a cofactor. Mn(2+) is required as a cofactor.

Its subcellular location is the plastid. It is found in the chloroplast. The enzyme catalyses (2R,3S)-3-isopropylmalate + NAD(+) = 4-methyl-2-oxopentanoate + CO2 + NADH. The protein operates within amino-acid biosynthesis; L-leucine biosynthesis; L-leucine from 3-methyl-2-oxobutanoate: step 3/4. Its function is as follows. Catalyzes the oxidation of 3-carboxy-2-hydroxy-4-methylpentanoate (3-isopropylmalate) to 3-carboxy-4-methyl-2-oxopentanoate. The product decarboxylates to 4-methyl-2 oxopentanoate. The sequence is that of 3-isopropylmalate dehydrogenase, chloroplastic from Brassica napus (Rape).